We begin with the raw amino-acid sequence, 178 residues long: MQSADNLIWIDLEMTGLDVDSCKIIEIAAIITDKDLNIIAEAEPIAIHQSDEILNSMNEWCIKVHCETGLTQRVKDSKISTEAAEQQILEFIRKFVPYQSSPLCGNSIWQDRRFLAKYMPKIDEYCHYRMLDVTTLKLLNQYWGDGKGFEKKNTHKALDDIRESIAELKFYRQKLLSI.

The 162-residue stretch at 7 to 168 (LIWIDLEMTG…DDIRESIAEL (162 aa)) folds into the Exonuclease domain. The active site involves Tyr-128.

Belongs to the oligoribonuclease family.

It is found in the cytoplasm. Functionally, 3'-to-5' exoribonuclease specific for small oligoribonucleotides. This Francisella tularensis subsp. novicida (strain U112) protein is Oligoribonuclease.